The chain runs to 457 residues: Transcription termination factor Rho (457 aa).

The tract at residues methionine 1–aspartate 23 is disordered. The 76-residue stretch at leucine 77–aspartate 152 folds into the Rho RNA-BD domain. Residues glycine 200–alanine 205, arginine 212–valine 217, and arginine 243 contribute to the ATP site.

The protein belongs to the Rho family. As to quaternary structure, homohexamer. The homohexamer assembles into an open ring structure.

Facilitates transcription termination by a mechanism that involves Rho binding to the nascent RNA, activation of Rho's RNA-dependent ATPase activity, and release of the mRNA from the DNA template. The polypeptide is Transcription termination factor Rho (Rickettsia prowazekii (strain Madrid E)).